The chain runs to 87 residues: Small ribosomal subunit protein bS16 (87 aa).

It belongs to the bacterial ribosomal protein bS16 family.

The protein is Small ribosomal subunit protein bS16 of Ehrlichia ruminantium (strain Welgevonden).